The sequence spans 193 residues: Acyl carrier protein phosphodiesterase (193 aa).

The protein belongs to the AcpH family.

The catalysed reaction is holo-[ACP] + H2O = apo-[ACP] + (R)-4'-phosphopantetheine + H(+). In terms of biological role, converts holo-ACP to apo-ACP by hydrolytic cleavage of the phosphopantetheine prosthetic group from ACP. This Yersinia pestis protein is Acyl carrier protein phosphodiesterase.